A 63-amino-acid polypeptide reads, in one-letter code: Large ribosomal subunit protein bL33 (63 aa).

The protein belongs to the bacterial ribosomal protein bL33 family.

The chain is Large ribosomal subunit protein bL33 from Gloeobacter violaceus (strain ATCC 29082 / PCC 7421).